A 451-amino-acid polypeptide reads, in one-letter code: Trigger factor (451 aa).

The region spanning 165–250 is the PPIase FKBP-type domain; the sequence is DDKLTIDFEG…LRQIQAREAL (86 aa).

The protein belongs to the FKBP-type PPIase family. Tig subfamily.

It is found in the cytoplasm. It carries out the reaction [protein]-peptidylproline (omega=180) = [protein]-peptidylproline (omega=0). Its function is as follows. Involved in protein export. Acts as a chaperone by maintaining the newly synthesized protein in an open conformation. Functions as a peptidyl-prolyl cis-trans isomerase. The sequence is that of Trigger factor from Helicobacter pylori (strain Shi470).